The primary structure comprises 433 residues: MGFHIYEIKARQIIDSRGNPTVEADVILEDGTYGRAAVPSGASTGINEAVELRDGDKSVYMGKGVLKAIENIKNIIAPELEGMSALNQVAIDRKMLELDGTPTKEKLGANAILAVSMATAKAAAKYLGLRPYQYLGAYKANILPTPMCNIINGGAHSDNSVDFQEFMIMPIGAKTFSEAIRMAAEVFHTLKGILSGKGYATSVGDEGGFAPNLKSNEEACEVIIEAIKKAGYEPGKDIAIALDPATSELYDPKTKKYVLKWSTKEELTSEQMVEYWAKWVEKYPIISIEDGMAEEDWDGWKKLTDKIGNKIQLVGDDLFVTNTSFLKKGIEMGVANSILIKVNQIGTLTETFEAVEMAKKAGYTAIVSHRSGETEDTTIADLVVALGTGQIKTGSLSRTDRIAKYNQLIRIEEELETTAEYHGKSVFYSIKQK.

Residue Gln164 participates in (2R)-2-phosphoglycerate binding. The active-site Proton donor is the Glu206. 3 residues coordinate Mg(2+): Asp243, Glu289, and Asp316. Residues Lys341, Arg370, Ser371, and Lys392 each coordinate (2R)-2-phosphoglycerate. Lys341 functions as the Proton acceptor in the catalytic mechanism.

Belongs to the enolase family. The cofactor is Mg(2+).

The protein resides in the cytoplasm. It is found in the secreted. Its subcellular location is the cell surface. It catalyses the reaction (2R)-2-phosphoglycerate = phosphoenolpyruvate + H2O. The protein operates within carbohydrate degradation; glycolysis; pyruvate from D-glyceraldehyde 3-phosphate: step 4/5. Functionally, catalyzes the reversible conversion of 2-phosphoglycerate (2-PG) into phosphoenolpyruvate (PEP). It is essential for the degradation of carbohydrates via glycolysis. This chain is Enolase, found in Borreliella burgdorferi (strain ZS7) (Borrelia burgdorferi).